Here is a 77-residue protein sequence, read N- to C-terminus: Cysteine-rich protein 1 (77 aa).

One can recognise an LIM zinc-binding domain in the interval 2–63; the sequence is PKCPKCNKEV…HPCYAAMFGP (62 aa). K9 and K22 each carry N6-acetyllysine. Omega-N-methylarginine is present on R68.

In terms of biological role, seems to have a role in zinc absorption and may function as an intracellular zinc transport protein. In Homo sapiens (Human), this protein is Cysteine-rich protein 1 (CRIP1).